A 247-amino-acid chain; its full sequence is MQQINFYRQRVAINVLAKDIANAKAIYEAAEGHAVIGVLSAQFATVEEGVPEVKRWMAEVPSISVGLGAGDPAQYYKAAMIAAHTHPAHVNQTFTGSGFAAGALAATGGEQTHINALVSPTGTPGEVVISTGVSSSQGTPARVSCEAAVRMMQDMGAHAAKFFPMGGEKSLPELYALATTAARHGMTLIEPTGGISLDNFGIILQTCLEAGVPRVMPHVYSSIIDPQTGNTRPEDIIRLMEIVKALV.

This sequence belongs to the DagF family.

The enzyme catalyses 2-dehydro-3-deoxy-6-phospho-D-gluconate = D-glyceraldehyde 3-phosphate + pyruvate. Involved in the catabolism of D-glucosaminate. Catalyzes the conversion of keto-3-deoxygluconate 6-phosphate (KDGP) to yield pyruvate and glyceraldehyde-3-phosphate. The chain is 2-dehydro-3-deoxy-phosphogluconate aldolase from Salmonella typhimurium (strain 14028s / SGSC 2262).